Here is a 269-residue protein sequence, read N- to C-terminus: Putative pyruvate, phosphate dikinase regulatory protein (269 aa).

147-154 (GVSRSSKT) is a binding site for ADP.

This sequence belongs to the pyruvate, phosphate/water dikinase regulatory protein family. PDRP subfamily.

It catalyses the reaction N(tele)-phospho-L-histidyl/L-threonyl-[pyruvate, phosphate dikinase] + ADP = N(tele)-phospho-L-histidyl/O-phospho-L-threonyl-[pyruvate, phosphate dikinase] + AMP + H(+). The enzyme catalyses N(tele)-phospho-L-histidyl/O-phospho-L-threonyl-[pyruvate, phosphate dikinase] + phosphate + H(+) = N(tele)-phospho-L-histidyl/L-threonyl-[pyruvate, phosphate dikinase] + diphosphate. Bifunctional serine/threonine kinase and phosphorylase involved in the regulation of the pyruvate, phosphate dikinase (PPDK) by catalyzing its phosphorylation/dephosphorylation. The protein is Putative pyruvate, phosphate dikinase regulatory protein of Trichlorobacter lovleyi (strain ATCC BAA-1151 / DSM 17278 / SZ) (Geobacter lovleyi).